A 322-amino-acid chain; its full sequence is MSTNFEKHFEENVDDCNLEQLRDILVNKEGKSALANRFRALFNLKTAASEFEANPSDAEKAVQYMGETFGDNSELLKHEVAYVLGQTKNLKAAPLLRKTMLDLAQQPMVRHEAAEALGALGDKDSLEDLEKCLKNDPHVAVRETCELAIARINWQHSDAPTKESLQQSLYSSIDPAPPLALEKEYDLEELKKLLNDQEKPLFLRYRAMFRLRDIGTDEAVLALASGFNDPSALFKHEIAYVFGQMGSTAAVPSLTEVLGRKEEAPMVRHEAAEALGAIASEDALPILKQYLNDEVDVVRESAIVALDMWEYENSNELEYAPA.

Residues His-78, Glu-79, His-111, and Glu-112 each coordinate Fe cation. HEAT-like PBS-type repeat units follow at residues 109 to 135, 203 to 229, 234 to 260, and 267 to 293; these read VRHE…CLKN, LRYR…GFND, FKHE…VLGR, and VRHE…YLND. Fe cation-binding residues include His-236, Glu-237, His-269, and Glu-270.

Belongs to the deoxyhypusine hydroxylase family. It depends on Fe(2+) as a cofactor.

It localises to the cytoplasm. It is found in the nucleus. The enzyme catalyses [eIF5A protein]-deoxyhypusine + AH2 + O2 = [eIF5A protein]-hypusine + A + H2O. It functions in the pathway protein modification; eIF5A hypusination. Its function is as follows. Catalyzes the hydroxylation of the N(6)-(4-aminobutyl)-L-lysine intermediate to form hypusine, an essential post-translational modification only found in mature eIF-5A factor. In Candida glabrata (strain ATCC 2001 / BCRC 20586 / JCM 3761 / NBRC 0622 / NRRL Y-65 / CBS 138) (Yeast), this protein is Deoxyhypusine hydroxylase.